Consider the following 261-residue polypeptide: Cytochrome c oxidase subunit 3 (261 aa).

Over 1-15 (MTHQTHAYHMVNPSP) the chain is Mitochondrial matrix. Residues 16–34 (WPLTGALSALLMTSGLIMW) form a helical membrane-spanning segment. Topologically, residues 35 to 40 (FHFNST) are mitochondrial intermembrane. A helical membrane pass occupies residues 41 to 66 (TLLMLGLTTNMLTMYQWWRDVVREST). Over 67–72 (FQGHHT) the chain is Mitochondrial matrix. The helical transmembrane segment at 73 to 105 (PNVQKGLRYGMILFIISEVLFFTGFFWAFYHSS) threads the bilayer. The Mitochondrial intermembrane portion of the chain corresponds to 106-128 (LAPTPELGGCWPPTGIHPLNPLE). The helical transmembrane segment at 129–152 (VPLLNTSVLLASGVSITWAHHSLM) threads the bilayer. The Mitochondrial matrix portion of the chain corresponds to 153–155 (EGN). A helical transmembrane segment spans residues 156–183 (RNHMLQALFITIALGVYFTLLQASEYYE). Over 184–190 (APFTISD) the chain is Mitochondrial intermembrane. Residues 191-223 (GVYGSTFFVATGFHGLHVIIGSTFLIVCFFRQL) traverse the membrane as a helical segment. Topologically, residues 224–232 (KFHFTSNHH) are mitochondrial matrix. Residues 233 to 256 (FGFEAAAWYWHFVDVVWLFLYVSI) traverse the membrane as a helical segment. Over 257-261 (YWWGS) the chain is Mitochondrial intermembrane.

The protein belongs to the cytochrome c oxidase subunit 3 family. As to quaternary structure, component of the cytochrome c oxidase (complex IV, CIV), a multisubunit enzyme composed of 14 subunits. The complex is composed of a catalytic core of 3 subunits MT-CO1, MT-CO2 and MT-CO3, encoded in the mitochondrial DNA, and 11 supernumerary subunits COX4I, COX5A, COX5B, COX6A, COX6B, COX6C, COX7A, COX7B, COX7C, COX8 and NDUFA4, which are encoded in the nuclear genome. The complex exists as a monomer or a dimer and forms supercomplexes (SCs) in the inner mitochondrial membrane with NADH-ubiquinone oxidoreductase (complex I, CI) and ubiquinol-cytochrome c oxidoreductase (cytochrome b-c1 complex, complex III, CIII), resulting in different assemblies (supercomplex SCI(1)III(2)IV(1) and megacomplex MCI(2)III(2)IV(2)).

Its subcellular location is the mitochondrion inner membrane. It catalyses the reaction 4 Fe(II)-[cytochrome c] + O2 + 8 H(+)(in) = 4 Fe(III)-[cytochrome c] + 2 H2O + 4 H(+)(out). Component of the cytochrome c oxidase, the last enzyme in the mitochondrial electron transport chain which drives oxidative phosphorylation. The respiratory chain contains 3 multisubunit complexes succinate dehydrogenase (complex II, CII), ubiquinol-cytochrome c oxidoreductase (cytochrome b-c1 complex, complex III, CIII) and cytochrome c oxidase (complex IV, CIV), that cooperate to transfer electrons derived from NADH and succinate to molecular oxygen, creating an electrochemical gradient over the inner membrane that drives transmembrane transport and the ATP synthase. Cytochrome c oxidase is the component of the respiratory chain that catalyzes the reduction of oxygen to water. Electrons originating from reduced cytochrome c in the intermembrane space (IMS) are transferred via the dinuclear copper A center (CU(A)) of subunit 2 and heme A of subunit 1 to the active site in subunit 1, a binuclear center (BNC) formed by heme A3 and copper B (CU(B)). The BNC reduces molecular oxygen to 2 water molecules using 4 electrons from cytochrome c in the IMS and 4 protons from the mitochondrial matrix. The chain is Cytochrome c oxidase subunit 3 (MT-CO3) from Gazella cuvieri (Cuvier's gazelle).